The following is a 437-amino-acid chain: MKLSNLAALLSASTVAPVAAGYVSQDIIRADTMNVAVAAAANAQDEDLLEKIISSSPLLSLHRTICQVESVSNHESAVGEALIKYLGENGFATEKQMVPVDEDDDSTDKRFNIWAYPEGSPKPKIILTSHIDTVPPHIDYNLQAPEGDFDRANITIKGRGTVDAKASVAAMIIAALGHLKEHPDVPLGLLFVVSEEKGGTGMVHFSDSDLNTTPPFFHTLIFGEPTELKLVDGHKGNLRFDVEARGVSAHSGYPWLGHSAISEILPVLERIDKLGDIPVKDGGLPASEKYGRTTLNIGMLKGGAAGNVVPESASASVAVRLAAGTIEDAQNIIRKAVADACGGSKNITITFPDSKAYPPVDLDTDVDGFELLTVNYGTDIPKLDIHDEDSDVKVKRYLYGPGTILVAHGADEALTVGDLEKAVKGYAKLIDAAVRRG.

A signal peptide spans 1–20; the sequence is MKLSNLAALLSASTVAPVAA. A glycan (N-linked (GlcNAc...) asparagine) is linked at Asn153. Asp163 is a Zn(2+) binding site. Residue Glu195 is the Proton acceptor of the active site. Glu196 serves as a coordination point for Zn(2+). N-linked (GlcNAc...) asparagine glycosylation occurs at Asn346.

The protein belongs to the peptidase M20A family. It depends on Zn(2+) as a cofactor.

Its subcellular location is the secreted. This is Probable carboxypeptidase HCBG_00059 from Ajellomyces capsulatus (strain G186AR / H82 / ATCC MYA-2454 / RMSCC 2432) (Darling's disease fungus).